The chain runs to 115 residues: Large ribosomal subunit protein uL18 (115 aa).

Belongs to the universal ribosomal protein uL18 family. In terms of assembly, part of the 50S ribosomal subunit; part of the 5S rRNA/L5/L18/L25 subcomplex. Contacts the 5S and 23S rRNAs.

Functionally, this is one of the proteins that bind and probably mediate the attachment of the 5S RNA into the large ribosomal subunit, where it forms part of the central protuberance. The chain is Large ribosomal subunit protein uL18 from Baumannia cicadellinicola subsp. Homalodisca coagulata.